A 166-amino-acid chain; its full sequence is Large ribosomal subunit protein eL21 (166 aa).

Belongs to the eukaryotic ribosomal protein eL21 family. In terms of assembly, component of the large ribosomal subunit.

The protein resides in the cytoplasm. It is found in the cytosol. Its subcellular location is the endoplasmic reticulum. In terms of biological role, component of the large ribosomal subunit. The ribosome is a large ribonucleoprotein complex responsible for the synthesis of proteins in the cell. This Entamoeba histolytica (strain ATCC 30459 / HM-1:IMSS / ABRM) protein is Large ribosomal subunit protein eL21 (RPL21).